Here is a 424-residue protein sequence, read N- to C-terminus: D-inositol 3-phosphate glycosyltransferase (424 aa).

Histidine 20 contacts 1D-myo-inositol 3-phosphate. UDP-N-acetyl-alpha-D-glucosamine-binding positions include 26 to 27 (QP) and glycine 34. 1D-myo-inositol 3-phosphate contacts are provided by residues 31–36 (DAGGMN), lysine 89, tyrosine 122, threonine 146, and arginine 166. The UDP-N-acetyl-alpha-D-glucosamine site is built by arginine 240, lysine 245, and methionine 306. Residues tyrosine 315, arginine 316, and alanine 318 each contribute to the Mg(2+) site. UDP-N-acetyl-alpha-D-glucosamine contacts are provided by glutamate 328 and glutamate 336. Mg(2+) is bound at residue threonine 342.

The protein belongs to the glycosyltransferase group 1 family. MshA subfamily. Homodimer.

It catalyses the reaction 1D-myo-inositol 3-phosphate + UDP-N-acetyl-alpha-D-glucosamine = 1D-myo-inositol 2-acetamido-2-deoxy-alpha-D-glucopyranoside 3-phosphate + UDP + H(+). Functionally, catalyzes the transfer of a N-acetyl-glucosamine moiety to 1D-myo-inositol 3-phosphate to produce 1D-myo-inositol 2-acetamido-2-deoxy-glucopyranoside 3-phosphate in the mycothiol biosynthesis pathway. The polypeptide is D-inositol 3-phosphate glycosyltransferase (Kribbella flavida (strain DSM 17836 / JCM 10339 / NBRC 14399)).